Consider the following 178-residue polypeptide: MSRIGKKPVVIPSGVTINVAAGNKVEVKGAKATLSKTFSTDVTFSVADNVATITPNNNSKNAVAQSGTARAILSNMVEGVSKGFERKLKIIGVGYRAKAQGNELNLTLGFSHPVVYKLPQGITAETPAPTEIILKGADKELLGKVASEVREYRKPEPYKGKGVRYEDEYVAKKEAKKK.

This sequence belongs to the universal ribosomal protein uL6 family. Part of the 50S ribosomal subunit.

In terms of biological role, this protein binds to the 23S rRNA, and is important in its secondary structure. It is located near the subunit interface in the base of the L7/L12 stalk, and near the tRNA binding site of the peptidyltransferase center. The protein is Large ribosomal subunit protein uL6 of Francisella tularensis subsp. holarctica (strain FTNF002-00 / FTA).